The following is a 428-amino-acid chain: RF4 protein (428 aa).

3 N-linked (GlcNAc...) asparagine glycosylation sites follow: Asn-8, Asn-205, and Asn-344.

Its function is as follows. Not known. The chain is RF4 protein (RF4) from Kluyveromyces lactis (strain ATCC 8585 / CBS 2359 / DSM 70799 / NBRC 1267 / NRRL Y-1140 / WM37) (Yeast).